The chain runs to 588 residues: MQTPKRRRGAQGCPRSSPSPPLLLLVRAVWFCAALSVAAGSFELTILHTNDVHARVEQTSRDSGKCTGQDCYGGVARRATKIRELRAKHRHVLLLDAGDQYQGTVWFNFFKGREVVKFMNSLRYDAMALGNHEFDNGLAGLLDPLLKHANFPILSANIRPKGSIASNISGYILPYKIINVGSEKVGIIGYTTKETPVLSNPGPYLEFRDEVEELQNHANKLTTLGVNKIIALGHSGFSEDQRIARKVKGVDVVVGGHTNTFLYTGSPPSTEVAAGNYPFMVQSDDGRQVPVVQAYAFGKYLGYLNVIFDDKGNVIKSSGNPILLNKDISEDQDIKAEVNKMKIQLHNYSSQEIGKTIVYLNGTTQACRFHECNLGNLICDAVIYNNVRHPDDNEWNHVSMCIVNGGGIRSPIDERTNNGTITLEELTAVLPFGGTFDLLQIKGSALKQAFEHSVHRHGEGMGELLQVSGIKVVYDLSRKPGSRVLSLNVLCTECRVPTYVPLEKEKTYKLLLPSFLAAGGDGYHMLKGDSSNHSSGNLDISIVGDYIKRMGKVFPAVEGRMIFSAGTLFQAQLFLTWGLCVSLLYFIL.

Positions 1–40 (MQTPKRRRGAQGCPRSSPSPPLLLLVRAVWFCAALSVAAG) are cleaved as a signal peptide. The Zn(2+) site is built by D51 and H53. A disulfide bridge links C66 with C71. Zn(2+) contacts are provided by D99 and N131. N167 carries an N-linked (GlcNAc...) asparagine glycan. Zn(2+) is bound by residues H234 and H257. N-linked (GlcNAc...) asparagine glycans are attached at residues N347 and N361. 2 disulfide bridges follow: C367–C372 and C379–C401. Residue R368 participates in AMP binding. AMP is bound by residues N404 and R409. A glycan (N-linked (GlcNAc...) asparagine) is linked at N418. F432 serves as a coordination point for AMP. C491 and C494 are disulfide-bonded. AMP is bound by residues F515 and D521. Residue N532 is glycosylated (N-linked (GlcNAc...) asparagine). A lipid anchor (GPI-anchor amidated serine) is attached at S564. The propeptide at 565-588 (AGTLFQAQLFLTWGLCVSLLYFIL) is removed in mature form.

It belongs to the 5'-nucleotidase family. Requires Zn(2+) as cofactor. Venom 5'-nucleotidases (or a part thereof) may be released into the venom via exosome-like vesicles. They may be attached via a GPI anchor to the membrane of these vesicles. Soluble forms of 5'-nucleotidase might be released by cleavage of the ectodomain in the exosome-like vesicles or venom gland cells. In terms of tissue distribution, expressed by the venom gland.

It is found in the membrane. It catalyses the reaction a ribonucleoside 5'-phosphate + H2O = a ribonucleoside + phosphate. Hydrolyzes nucleotides into nucleosides. Snake venom 5'-nucleotidases are widely distributed among venomous snake taxa, but there is a lack of information about their biological activities. They have been shown to inhibit platelet aggregation. This effect may be due to the liberation of inhibitory AMP or adenosine by its action on ADP released upon initiation of aggregation. Venom 5'-nucleotidases are also known to synergistically act in vivo with other toxins like ADPases, phospholipases, and disintegrins to exert a more pronounced anti-coagulant effect. The protein is Snake venom 5'-nucleotidase of Crotalus adamanteus (Eastern diamondback rattlesnake).